We begin with the raw amino-acid sequence, 88 residues long: Large ribosomal subunit protein bL27 (88 aa).

The disordered stretch occupies residues 1–24; sequence MAHKKGTGSTRNGRDSNSKRLGVK.

This sequence belongs to the bacterial ribosomal protein bL27 family.

The polypeptide is Large ribosomal subunit protein bL27 (Prochlorococcus marinus (strain MIT 9303)).